The sequence spans 190 residues: Nucleoside triphosphate pyrophosphatase (190 aa).

Aspartate 69 functions as the Proton acceptor in the catalytic mechanism.

It belongs to the Maf family. It depends on a divalent metal cation as a cofactor.

Its subcellular location is the cytoplasm. The enzyme catalyses a ribonucleoside 5'-triphosphate + H2O = a ribonucleoside 5'-phosphate + diphosphate + H(+). It catalyses the reaction a 2'-deoxyribonucleoside 5'-triphosphate + H2O = a 2'-deoxyribonucleoside 5'-phosphate + diphosphate + H(+). Functionally, nucleoside triphosphate pyrophosphatase. May have a dual role in cell division arrest and in preventing the incorporation of modified nucleotides into cellular nucleic acids. This Helicobacter pylori (strain HPAG1) protein is Nucleoside triphosphate pyrophosphatase.